The following is a 155-amino-acid chain: Ribonuclease H (155 aa).

Positions 1–142 (MLKQVEIFTD…CDELARAAAM (142 aa)) constitute an RNase H type-1 domain. Mg(2+) contacts are provided by D10, E48, D70, and D134.

It belongs to the RNase H family. As to quaternary structure, monomer. Requires Mg(2+) as cofactor.

Its subcellular location is the cytoplasm. It catalyses the reaction Endonucleolytic cleavage to 5'-phosphomonoester.. In terms of biological role, endonuclease that specifically degrades the RNA of RNA-DNA hybrids. The sequence is that of Ribonuclease H from Salmonella paratyphi A (strain AKU_12601).